Here is a 302-residue protein sequence, read N- to C-terminus: Protocatechuate 4,5-dioxygenase beta chain (302 aa).

Composed of two subunits (alpha and beta) in a 1:1 ratio. Requires Fe(2+) as cofactor.

It catalyses the reaction 3,4-dihydroxybenzoate + O2 = 4-carboxy-2-hydroxy-cis,cis-muconate 6-semialdehyde + H(+). Responsible for the aromatic ring fission of protocatechuate. This Sphingobium sp. (strain NBRC 103272 / SYK-6) protein is Protocatechuate 4,5-dioxygenase beta chain (ligB).